Here is a 258-residue protein sequence, read N- to C-terminus: ER membrane protein complex subunit 3 (258 aa).

The next 3 membrane-spanning stretches (helical) occupy residues 8-28, 123-143, and 173-193; these read PALR…IGIL, VVPQ…FILL, and SISW…LLLG.

Belongs to the EMC3 family.

The protein localises to the cytoplasm. The protein resides in the membrane. The sequence is that of ER membrane protein complex subunit 3 from Schizosaccharomyces pombe (strain 972 / ATCC 24843) (Fission yeast).